Here is a 209-residue protein sequence, read N- to C-terminus: Glutathione S-transferase F7 (209 aa).

A GST N-terminal domain is found at 2–83 (AGIKVFGHPA…YIAHFYSDKG (82 aa)). Residues 12–13 (ST), 41–42 (HK), 54–55 (KV), and 67–68 (ES) contribute to the glutathione site. The GST C-terminal domain occupies 90 to 209 (GSKDIAGIAM…TSRPSAKKVL (120 aa)).

It belongs to the GST superfamily. Phi family.

The protein resides in the cytoplasm. Its subcellular location is the cytosol. The catalysed reaction is RX + glutathione = an S-substituted glutathione + a halide anion + H(+). Its function is as follows. May be involved in the conjugation of reduced glutathione to a wide number of exogenous and endogenous hydrophobic electrophiles and have a detoxification role against certain herbicides. The protein is Glutathione S-transferase F7 of Arabidopsis thaliana (Mouse-ear cress).